The primary structure comprises 260 residues: Putative serine protease 45 (260 aa).

The Peptidase S1 domain occupies Met-1–Ser-234. Cys-19 and Cys-35 are oxidised to a cystine. Catalysis depends on His-34, which acts as the Charge relay system. A glycan (N-linked (GlcNAc...) asparagine) is linked at Asn-55. Asp-82 serves as the catalytic Charge relay system. Cystine bridges form between Cys-116–Cys-192, Cys-151–Cys-173, and Cys-182–Cys-210. The Charge relay system role is filled by Ser-186.

This sequence belongs to the peptidase S1 family.

This chain is Putative serine protease 45, found in Homo sapiens (Human).